The sequence spans 232 residues: 2,3,4,5-tetrahydropyridine-2,6-dicarboxylate N-acetyltransferase (232 aa).

It belongs to the transferase hexapeptide repeat family. DapH subfamily.

The enzyme catalyses (S)-2,3,4,5-tetrahydrodipicolinate + acetyl-CoA + H2O = L-2-acetamido-6-oxoheptanedioate + CoA. The protein operates within amino-acid biosynthesis; L-lysine biosynthesis via DAP pathway; LL-2,6-diaminopimelate from (S)-tetrahydrodipicolinate (acetylase route): step 1/3. Catalyzes the transfer of an acetyl group from acetyl-CoA to tetrahydrodipicolinate. The sequence is that of 2,3,4,5-tetrahydropyridine-2,6-dicarboxylate N-acetyltransferase from Streptococcus sanguinis (strain SK36).